The following is a 90-amino-acid chain: Small ribosomal subunit protein uS15c (90 aa).

Belongs to the universal ribosomal protein uS15 family. Part of the 30S ribosomal subunit.

It is found in the plastid. Its subcellular location is the chloroplast. The polypeptide is Small ribosomal subunit protein uS15c (rps15-A) (Brachypodium distachyon (Purple false brome)).